The primary structure comprises 547 residues: 2-succinyl-5-enolpyruvyl-6-hydroxy-3-cyclohexene-1-carboxylate synthase (547 aa).

Belongs to the TPP enzyme family. MenD subfamily. In terms of assembly, homodimer. The cofactor is Mg(2+). Requires Mn(2+) as cofactor. Thiamine diphosphate serves as cofactor.

The catalysed reaction is isochorismate + 2-oxoglutarate + H(+) = 5-enolpyruvoyl-6-hydroxy-2-succinyl-cyclohex-3-ene-1-carboxylate + CO2. Its pathway is quinol/quinone metabolism; 1,4-dihydroxy-2-naphthoate biosynthesis; 1,4-dihydroxy-2-naphthoate from chorismate: step 2/7. The protein operates within quinol/quinone metabolism; menaquinone biosynthesis. Its function is as follows. Catalyzes the thiamine diphosphate-dependent decarboxylation of 2-oxoglutarate and the subsequent addition of the resulting succinic semialdehyde-thiamine pyrophosphate anion to isochorismate to yield 2-succinyl-5-enolpyruvyl-6-hydroxy-3-cyclohexene-1-carboxylate (SEPHCHC). The sequence is that of 2-succinyl-5-enolpyruvyl-6-hydroxy-3-cyclohexene-1-carboxylate synthase from Mycobacterium sp. (strain JLS).